The following is a 234-amino-acid chain: LexA repressor (234 aa).

A compositionally biased stretch (basic and acidic residues) spans 1–11 (MNEATSHEGPK). The tract at residues 1–34 (MNEATSHEGPKRSLPGRPPGIRADSSGLTDRQRR) is disordered. The segment at residues 52 to 72 (MREIGQAVGLSSTSSVAHQLM) is a DNA-binding region (H-T-H motif). The segment covering 83–94 (DPHRPRAYEVRG) has biased composition (basic and acidic residues). The interval 83 to 109 (DPHRPRAYEVRGSDQSSSVQPTDTAGK) is disordered. Positions 95-105 (SDQSSSVQPTD) are enriched in polar residues. Residues Ser-158 and Lys-195 each act as for autocatalytic cleavage activity in the active site.

The protein belongs to the peptidase S24 family. Homodimer.

The enzyme catalyses Hydrolysis of Ala-|-Gly bond in repressor LexA.. Functionally, represses a number of genes involved in the response to DNA damage (SOS response), including recA and lexA. In the presence of single-stranded DNA, RecA interacts with LexA causing an autocatalytic cleavage which disrupts the DNA-binding part of LexA, leading to derepression of the SOS regulon and eventually DNA repair. This Streptomyces avermitilis (strain ATCC 31267 / DSM 46492 / JCM 5070 / NBRC 14893 / NCIMB 12804 / NRRL 8165 / MA-4680) protein is LexA repressor.